A 272-amino-acid polypeptide reads, in one-letter code: MRQIAIYGKGGIGKSTTTQNTVAALAEAGKKIMVVGCDPKADSTRLLLHGLNQKTVLDTLRDEGEDIDLEDVLKTGYGDTKCVESGGPEPGVGCAGRGIITSINLLESLGAYTNDLDYVFYDVLGDVVCGGFAMPIREGKAREIYIVASGEMMALYAANNISKGVQKFANTGGVRLGGIICNSRKVDNELELLTAFAKELGSQLIHFVPRDNMVQRAEINKKTVIDFDPAQPQADEYRTLAQNIDGNDMFVIPKPMTQDRLEELLMAHGILD.

8-15 (GKGGIGKS) is a binding site for ATP. Cys-94 lines the [4Fe-4S] cluster pocket. Arg-97 carries the ADP-ribosylarginine; by dinitrogenase reductase ADP-ribosyltransferase modification. Position 129 (Cys-129) interacts with [4Fe-4S] cluster.

It belongs to the NifH/BchL/ChlL family. As to quaternary structure, homodimer. The cofactor is [4Fe-4S] cluster. Post-translationally, the reversible ADP-ribosylation of Arg-97 inactivates the nitrogenase reductase and regulates nitrogenase activity.

It catalyses the reaction N2 + 8 reduced [2Fe-2S]-[ferredoxin] + 16 ATP + 16 H2O = H2 + 8 oxidized [2Fe-2S]-[ferredoxin] + 2 NH4(+) + 16 ADP + 16 phosphate + 6 H(+). In terms of biological role, the key enzymatic reactions in nitrogen fixation are catalyzed by the nitrogenase complex, which has 2 components: the iron protein and the molybdenum-iron protein. This is Nitrogenase iron protein from Desulforamulus reducens (strain ATCC BAA-1160 / DSM 100696 / MI-1) (Desulfotomaculum reducens).